Consider the following 490-residue polypeptide: Cis-aconitate decarboxylase (490 aa).

This sequence belongs to the PrpD family.

The protein resides in the mitochondrion. The catalysed reaction is cis-aconitate + H(+) = itaconate + CO2. Involved in the production of itaconic acid, a soluble unsaturated dicarboxylic acid mainly produced from sugars. The polypeptide is Cis-aconitate decarboxylase (cad1) (Aspergillus terreus).